The sequence spans 358 residues: Phenylalanine--tRNA ligase alpha subunit (358 aa).

Glu-258 provides a ligand contact to Mg(2+).

Belongs to the class-II aminoacyl-tRNA synthetase family. Phe-tRNA synthetase alpha subunit type 1 subfamily. Tetramer of two alpha and two beta subunits. Requires Mg(2+) as cofactor.

Its subcellular location is the cytoplasm. The catalysed reaction is tRNA(Phe) + L-phenylalanine + ATP = L-phenylalanyl-tRNA(Phe) + AMP + diphosphate + H(+). The sequence is that of Phenylalanine--tRNA ligase alpha subunit from Rhodospirillum centenum (strain ATCC 51521 / SW).